The chain runs to 561 residues: Urocanate hydratase (561 aa).

NAD(+) contacts are provided by residues 52 to 53 (GG), Gln130, 176 to 178 (GMG), Glu196, Arg201, 242 to 243 (NA), 267 to 271 (QTSAH), 277 to 278 (YL), and Tyr326. Cys414 is a catalytic residue. Gly496 lines the NAD(+) pocket.

It belongs to the urocanase family. NAD(+) serves as cofactor.

It localises to the cytoplasm. It catalyses the reaction 4-imidazolone-5-propanoate = trans-urocanate + H2O. It functions in the pathway amino-acid degradation; L-histidine degradation into L-glutamate; N-formimidoyl-L-glutamate from L-histidine: step 2/3. Its function is as follows. Catalyzes the conversion of urocanate to 4-imidazolone-5-propionate. The protein is Urocanate hydratase of Rhizobium rhizogenes (strain K84 / ATCC BAA-868) (Agrobacterium radiobacter).